The following is a 762-amino-acid chain: 5-methyltetrahydropteroyltriglutamate--homocysteine methyltransferase (762 aa).

5-methyltetrahydropteroyltri-L-glutamate-binding positions include 17-20 (REWK) and lysine 111. Residues 435–437 (IGS) and glutamate 488 contribute to the L-homocysteine site. L-methionine-binding positions include 435–437 (IGS) and glutamate 488. 5-methyltetrahydropteroyltri-L-glutamate is bound by residues 519–520 (RC) and tryptophan 565. Aspartate 603 serves as a coordination point for L-homocysteine. Residue aspartate 603 coordinates L-methionine. Glutamate 609 is a 5-methyltetrahydropteroyltri-L-glutamate binding site. Zn(2+) contacts are provided by histidine 645, cysteine 647, and glutamate 669. Catalysis depends on histidine 698, which acts as the Proton donor. Cysteine 730 contacts Zn(2+).

It belongs to the vitamin-B12 independent methionine synthase family. Requires Zn(2+) as cofactor.

It carries out the reaction 5-methyltetrahydropteroyltri-L-glutamate + L-homocysteine = tetrahydropteroyltri-L-glutamate + L-methionine. Its pathway is amino-acid biosynthesis; L-methionine biosynthesis via de novo pathway; L-methionine from L-homocysteine (MetE route): step 1/1. Catalyzes the transfer of a methyl group from 5-methyltetrahydrofolate to homocysteine resulting in methionine formation. The chain is 5-methyltetrahydropteroyltriglutamate--homocysteine methyltransferase from Bacillus anthracis (strain A0248).